A 96-amino-acid polypeptide reads, in one-letter code: CRISPR-associated endoribonuclease Cas2 1 (96 aa).

Aspartate 8 contributes to the Mg(2+) binding site.

Belongs to the CRISPR-associated endoribonuclease Cas2 protein family. In terms of assembly, homodimer, forms a heterotetramer with a Cas1 homodimer. Mg(2+) is required as a cofactor.

Its function is as follows. CRISPR (clustered regularly interspaced short palindromic repeat), is an adaptive immune system that provides protection against mobile genetic elements (viruses, transposable elements and conjugative plasmids). CRISPR clusters contain sequences complementary to antecedent mobile elements and target invading nucleic acids. CRISPR clusters are transcribed and processed into CRISPR RNA (crRNA). Functions as a ssRNA-specific endoribonuclease. Involved in the integration of spacer DNA into the CRISPR cassette. The chain is CRISPR-associated endoribonuclease Cas2 1 from Moorella thermoacetica (strain ATCC 39073 / JCM 9320).